Reading from the N-terminus, the 662-residue chain is Biosynthetic arginine decarboxylase (662 aa).

K126 bears the N6-(pyridoxal phosphate)lysine mark. 308–318 contacts substrate; it reads LNVGGGLGVDY.

The protein belongs to the Orn/Lys/Arg decarboxylase class-II family. SpeA subfamily. The cofactor is Mg(2+). It depends on pyridoxal 5'-phosphate as a cofactor.

The catalysed reaction is L-arginine + H(+) = agmatine + CO2. Functionally, catalyzes the biosynthesis of agmatine from arginine. This Deinococcus radiodurans (strain ATCC 13939 / DSM 20539 / JCM 16871 / CCUG 27074 / LMG 4051 / NBRC 15346 / NCIMB 9279 / VKM B-1422 / R1) protein is Biosynthetic arginine decarboxylase.